Reading from the N-terminus, the 257-residue chain is uncharacterized protein (257 aa).

This is an uncharacterized protein from Mycobacterium tuberculosis (strain CDC 1551 / Oshkosh).